The primary structure comprises 174 residues: Large ribosomal subunit protein uL10 (174 aa).

It belongs to the universal ribosomal protein uL10 family. As to quaternary structure, part of the ribosomal stalk of the 50S ribosomal subunit. The N-terminus interacts with L11 and the large rRNA to form the base of the stalk. The C-terminus forms an elongated spine to which L12 dimers bind in a sequential fashion forming a multimeric L10(L12)X complex.

In terms of biological role, forms part of the ribosomal stalk, playing a central role in the interaction of the ribosome with GTP-bound translation factors. The polypeptide is Large ribosomal subunit protein uL10 (Anaeromyxobacter dehalogenans (strain 2CP-C)).